We begin with the raw amino-acid sequence, 374 residues long: Dual-specificity RNA methyltransferase RlmN (374 aa).

E91 functions as the Proton acceptor in the catalytic mechanism. The Radical SAM core domain occupies 97 to 340 (EDDRGTLCVS…TTVRKTRGDD (244 aa)). C104 and C345 are oxidised to a cystine. The [4Fe-4S] cluster site is built by C111, C115, and C118. Residues 166–167 (GE), S198, 220–222 (SLH), and N302 contribute to the S-adenosyl-L-methionine site. C345 (S-methylcysteine intermediate) is an active-site residue.

Belongs to the radical SAM superfamily. RlmN family. [4Fe-4S] cluster serves as cofactor.

The protein resides in the cytoplasm. It carries out the reaction adenosine(2503) in 23S rRNA + 2 reduced [2Fe-2S]-[ferredoxin] + 2 S-adenosyl-L-methionine = 2-methyladenosine(2503) in 23S rRNA + 5'-deoxyadenosine + L-methionine + 2 oxidized [2Fe-2S]-[ferredoxin] + S-adenosyl-L-homocysteine. The enzyme catalyses adenosine(37) in tRNA + 2 reduced [2Fe-2S]-[ferredoxin] + 2 S-adenosyl-L-methionine = 2-methyladenosine(37) in tRNA + 5'-deoxyadenosine + L-methionine + 2 oxidized [2Fe-2S]-[ferredoxin] + S-adenosyl-L-homocysteine. Its function is as follows. Specifically methylates position 2 of adenine 2503 in 23S rRNA and position 2 of adenine 37 in tRNAs. m2A2503 modification seems to play a crucial role in the proofreading step occurring at the peptidyl transferase center and thus would serve to optimize ribosomal fidelity. The polypeptide is Dual-specificity RNA methyltransferase RlmN (Delftia acidovorans (strain DSM 14801 / SPH-1)).